The following is a 600-amino-acid chain: Single-strand DNA endonuclease 1 (600 aa).

Residues 1 to 97 (MGVKYLWDVL…KRRLKARFEI (97 aa)) are N-domain. Positions 2-97 (GVKYLWDVLE…KRRLKARFEI (96 aa)) are XPG-N domain. Positions 30, 76, 142, 144, 163, 165, and 215 each coordinate Mg(2+). An XPG-I domain region spans residues 130 to 215 (STLGILCLDG…IALALLLGSD (86 aa)). I-domain regions lie at residues 130-218 (STLG…DYSQ) and 130-219 (STLG…YSQG). Residues 215–353 (DYSQGVRGLR…ILPKVAERNL (139 aa)) are 5'-3' exonuclease domain. Positions 433–458 (MAAKKKKPKPKQKQKETSSPTKSSSL) are disordered. The segment covering 435 to 444 (AKKKKPKPKQ) has biased composition (basic residues).

The protein belongs to the XPG/RAD2 endonuclease family. GEN subfamily. Requires Mg(2+) as cofactor.

The protein resides in the nucleus. Its function is as follows. Endonuclease which cleaves flap structures at the junction between single-stranded DNA and double-stranded DNA with a specific cleavage site in the 5' overhang strand exactly one nucleotide 3' of the branch point. Structure- and sequence-specific nuclease that resolves holliday junctions (HJs) by symmetrically oriented incisions in two opposing strands near the junction point, thus leading to ligatable products; HJs are physical links between homologous DNA molecules that arise as central intermediary structures during homologous recombination and repair in meiotic and somatic cells. Structure-specific nuclease with 5'-flap endonuclease activity, preferentially cleaving static flaps 5' overhang strand exactly one nucleotide in the 3' direction of the branch point and, to lower extent, on the two neighboring positions. Also able to cleave double-stranded flap strand 1 one nucleotide in the 3' direction of the branch point. Together with MUS81, essential for the resolution of toxic replication structures to ensure genome stability, and to maintain telomere integrity and replication. In Arabidopsis thaliana (Mouse-ear cress), this protein is Single-strand DNA endonuclease 1.